A 698-amino-acid polypeptide reads, in one-letter code: Elongation factor G (698 aa).

Residues 8 to 290 enclose the tr-type G domain; sequence ERYRNIGISA…AVIELLPSPV (283 aa). Residues 17-24, 88-92, and 142-145 each bind GTP; these read AHIDAGKT, DTPGH, and NKMD.

Belongs to the TRAFAC class translation factor GTPase superfamily. Classic translation factor GTPase family. EF-G/EF-2 subfamily.

It localises to the cytoplasm. Functionally, catalyzes the GTP-dependent ribosomal translocation step during translation elongation. During this step, the ribosome changes from the pre-translocational (PRE) to the post-translocational (POST) state as the newly formed A-site-bound peptidyl-tRNA and P-site-bound deacylated tRNA move to the P and E sites, respectively. Catalyzes the coordinated movement of the two tRNA molecules, the mRNA and conformational changes in the ribosome. In Aromatoleum aromaticum (strain DSM 19018 / LMG 30748 / EbN1) (Azoarcus sp. (strain EbN1)), this protein is Elongation factor G.